We begin with the raw amino-acid sequence, 321 residues long: Phospho-N-acetylmuramoyl-pentapeptide-transferase (321 aa).

The next 9 helical transmembrane spans lie at 1–21 (MSLLVWGATLISGFIIVFALM), 53–73 (TMGGLLFIIAILVTTLWVGGW), 77–97 (LQPTTWILMFILVLYGALGFW), 110–130 (GLKAWQKLLGQVIGAVILTLV), 145–165 (LGVWSLGIWYMLFAIIWLVGF), 174–194 (GLDGLVAGQATIAFGAYAVIA), 200–220 (YNVMLFCLAVVGSLLGFFVYN), 226–248 (IFMGDMGSLALGGALAAVSILLH), and 301–321 (IDIVFWSIGLVAAVISVATII).

The protein belongs to the glycosyltransferase 4 family. MraY subfamily. Mg(2+) serves as cofactor.

The protein resides in the cell membrane. The enzyme catalyses UDP-N-acetyl-alpha-D-muramoyl-L-alanyl-gamma-D-glutamyl-L-lysyl-D-alanyl-D-alanine + di-trans,octa-cis-undecaprenyl phosphate = Mur2Ac(oyl-L-Ala-gamma-D-Glu-L-Lys-D-Ala-D-Ala)-di-trans,octa-cis-undecaprenyl diphosphate + UMP. It participates in cell wall biogenesis; peptidoglycan biosynthesis. Catalyzes the initial step of the lipid cycle reactions in the biosynthesis of the cell wall peptidoglycan: transfers peptidoglycan precursor phospho-MurNAc-pentapeptide from UDP-MurNAc-pentapeptide onto the lipid carrier undecaprenyl phosphate, yielding undecaprenyl-pyrophosphoryl-MurNAc-pentapeptide, known as lipid I. In Lactiplantibacillus plantarum (strain ATCC BAA-793 / NCIMB 8826 / WCFS1) (Lactobacillus plantarum), this protein is Phospho-N-acetylmuramoyl-pentapeptide-transferase.